A 584-amino-acid polypeptide reads, in one-letter code: Alpha-glucosidase MAL12 (584 aa).

The active-site Nucleophile is aspartate 214. Catalysis depends on glutamate 276, which acts as the Proton donor.

It belongs to the glycosyl hydrolase 13 family.

It catalyses the reaction Hydrolysis of terminal, non-reducing (1-&gt;4)-linked alpha-D-glucose residues with release of alpha-D-glucose.. This is Alpha-glucosidase MAL12 (MAL12) from Saccharomyces cerevisiae (strain ATCC 204508 / S288c) (Baker's yeast).